A 390-amino-acid polypeptide reads, in one-letter code: Flap endonuclease 1-2 (390 aa).

Positions 1–108 (MGIHQLMQFL…GELARRKKLK (108 aa)) are N-domain. Residue aspartate 34 participates in Mg(2+) binding. Position 74 (arginine 74) interacts with DNA. Mg(2+) is bound by residues aspartate 90, glutamate 162, glutamate 164, aspartate 183, and aspartate 185. Positions 126 to 254 (QALLQNQRTT…GTAYKLIKEY (129 aa)) are I-domain. Glutamate 162 is a DNA binding site. 2 residues coordinate DNA: glycine 232 and aspartate 234. Aspartate 234 is a Mg(2+) binding site. An interaction with PCNA region spans residues 348 to 356 (FQSRLENFF). The interval 359-390 (TTKIIHPNNSKAKAKSNKKTEQPQKSGGKKKI) is disordered.

The protein belongs to the XPG/RAD2 endonuclease family. FEN1 subfamily. Interacts with PCNA. Three molecules of FEN1 bind to one PCNA trimer with each molecule binding to one PCNA monomer. PCNA stimulates the nuclease activity without altering cleavage specificity. Mg(2+) is required as a cofactor. Phosphorylated. Phosphorylation upon DNA damage induces relocalization to the nuclear plasma.

It localises to the nucleus. The protein localises to the nucleolus. Its subcellular location is the nucleoplasm. It is found in the mitochondrion. In terms of biological role, structure-specific nuclease with 5'-flap endonuclease and 5'-3' exonuclease activities involved in DNA replication and repair. During DNA replication, cleaves the 5'-overhanging flap structure that is generated by displacement synthesis when DNA polymerase encounters the 5'-end of a downstream Okazaki fragment. It enters the flap from the 5'-end and then tracks to cleave the flap base, leaving a nick for ligation. Also involved in the long patch base excision repair (LP-BER) pathway, by cleaving within the apurinic/apyrimidinic (AP) site-terminated flap. Acts as a genome stabilization factor that prevents flaps from equilibrating into structures that lead to duplications and deletions. Also possesses 5'-3' exonuclease activity on nicked or gapped double-stranded DNA, and exhibits RNase H activity. Also involved in replication and repair of rDNA and in repairing mitochondrial DNA. This chain is Flap endonuclease 1-2, found in Paramecium tetraurelia.